The sequence spans 27 residues: Palustrin-1d (27 aa).

Cys21 and Cys27 are joined by a disulfide.

Expressed by the skin glands.

The protein resides in the secreted. Antimicrobial activity against Gram-negative bacterium E.coli. This is Palustrin-1d from Lithobates palustris (Pickerel frog).